A 235-amino-acid chain; its full sequence is UPF0758 protein A1S_2918 (235 aa).

Positions 1–20 are disordered; sequence MNTSIKNWPEQERPRERLLQ. Over residues 9–18 the composition is skewed to basic and acidic residues; that stretch reads PEQERPRERL. The region spanning 105-227 is the MPN domain; sequence SLHSSHLVLD…SFSFAEQQLL (123 aa). H176, H178, and D189 together coordinate Zn(2+). A JAMM motif motif is present at residues 176-189; sequence HNHPFGSPQPSPED.

This sequence belongs to the UPF0758 family.

This Acinetobacter baumannii (strain ATCC 17978 / DSM 105126 / CIP 53.77 / LMG 1025 / NCDC KC755 / 5377) protein is UPF0758 protein A1S_2918.